The chain runs to 3841 residues: Transformation/transcription domain-associated protein (3841 aa).

2 disordered regions span residues 491–516 and 2002–2027; these read TPTV…PPAT and QQPE…MKRG. Positions 498–515 are enriched in pro residues; it reads ALPPPAPPTPVTPAPPPA. The Bipartite nuclear localization signal motif lies at 2025–2040; it reads KRGMSVDSAQDVKRFR. The 569-residue stretch at 2671-3239 folds into the FAT domain; that stretch reads VLKYLGKTHN…YFPIRTLYLT (569 aa). The segment at 3249–3271 is disordered; the sequence is KSDSGQQQPSSAAAQTHSASDPG. Residues 3251–3268 are compositionally biased toward low complexity; the sequence is DSGQQQPSSAAAQTHSAS. The region spanning 3482–3805 is the PI3K/PI4K catalytic domain; sequence MPRVEIVQKH…AVTAIMTRLH (324 aa). The tract at residues 3488–3494 is G-loop; sequence VQKHNTA. Residues 3669-3677 form a catalytic loop region; sequence HLNRLNPEM. The interval 3689-3714 is activation loop; it reads VSYFRFDINDATGDLDANRPVPFRLT. Residues 3809–3841 enclose the FATC domain; that stretch reads QFEGGESKVNTLVAAANSLDNLCRMDPAWHPWL.

This sequence belongs to the PI3/PI4-kinase family. TRA1 subfamily.

It is found in the nucleus. Its function is as follows. Adapter protein, which is found in various multiprotein chromatin complexes with histone acetyltransferase activity (HAT), which gives a specific tag for epigenetic transcription activation. May be required for the mitotic checkpoint and normal cell cycle progression. May play a role in the formation and maintenance of the auditory system. The protein is Transformation/transcription domain-associated protein of Danio rerio (Zebrafish).